Consider the following 303-residue polypeptide: Probable cell division protein WhiA (303 aa).

Positions Ser272–Leu303 form a DNA-binding region, H-T-H motif.

Belongs to the WhiA family.

In terms of biological role, involved in cell division and chromosome segregation. This chain is Probable cell division protein WhiA, found in Streptococcus gordonii (strain Challis / ATCC 35105 / BCRC 15272 / CH1 / DL1 / V288).